A 558-amino-acid chain; its full sequence is MEIRAAEDIEIRTDLFPPLSPLASSLYDSFLSSHCSSCFSLLPPSPPQPLYCSAACSLTDSFTNSPQFPPEITPILPSDIRTSLHLLNSTAVDTSSSPHRLNNLLTNHHLLMADPSISVAIHHAANFIATVIRSNRKNTELEEAAICAVLTNAVEVHDSNGLALGIALYNSSFSWINHSCSPNSCYRFVNNRTSYHDVHVTNTETSSNLELQEQVCGTSLNSGNGNGPKLIVRSIKRIKSGEEITVSYIDLLQPTGLRQSDLWSKYRFMCNCGRCAASPPAYVDSILEGVLTLESEKTTVGHFDGSTNKDEAVGKMNDYIQEAIDDFLSDNIDPKTCCEMIESVLHHGIQFKEDSQPHCLRLHACHYVALNAYITLATAYRIRSIDSETGIVCDMSRISAAYSLFLAGVSHHLFCAERSFAISAAKFWKNAGELLFDLAPKLLMELSVESDVKCTKCLMLETSNSHRDIKEKSRQILSCVRDISQVTWSFLTRGCPYLEKFRSPVDFSLTRTNGEREESSKDQTVNVLLLSSHCLLYADLLTDLCYGQKSHLVSRFRL.

An SET domain is found at 115–249 (PSISVAIHHA…SGEEITVSYI (135 aa)).

This sequence belongs to the class V-like SAM-binding methyltransferase superfamily.

This Arabidopsis thaliana (Mouse-ear cress) protein is Protein SET DOMAIN GROUP 41 (SDG41).